Reading from the N-terminus, the 440-residue chain is MTVQNPQEPEYFPEVFPQDAFPQYAWDEGMRPITLPHEVWLSETTHRDGQQGGLPLSLDTSRRIYDILCEITGDSTAIRHAEFFPYRDSDRNALIYALERHRDGAPIEPTTWIRARREDVELIKRIGVIETGLLSSSSDYHTFHKFGSGGRTQAASMYLDAVTMALDHGIRPRVHLEDTTRSSPDFVRALVEEVLKTAERYPAELQPRFRVCDTLGIGLPYDDVSLPRSIPRWIRLLRGFGLSPSQIELHPHNDTWLVVANCLAAIREGCGVISGTTLGTGERTGNAPLEAVMVHLLGMGYWSGARVNLPAVNKLVELYEGIGAGPSQKYPFFGRDAYVTRAGIHADGLNKFWWMYAPFNAPLLTGRELDVALTKDSGQAGLLFVLNKRLGLQLEKGDPRVAEVLAWMDRQWDAGRVSAVEWSELEPVVEKAFATEEGVG.

The 275-residue stretch at 39-313 (VWLSETTHRD…GARVNLPAVN (275 aa)) folds into the Pyruvate carboxyltransferase domain.

The protein belongs to the alpha-IPM synthase/homocitrate synthase family. Homodimer. Mn(2+) serves as cofactor. It depends on Co(2+) as a cofactor.

It catalyses the reaction 3-(hydrohydroxyphosphoryl)pyruvate + acetyl-CoA + H2O = phosphinomethylmalate + CoA + H(+). It participates in secondary metabolite biosynthesis; bialaphos biosynthesis. With respect to regulation, strongly inhibited by p-chloromercuribenzoate (pCMB), iodoacetamide (IA) and EDTA. In terms of biological role, involved in the biosynthesis of phosphinothricin tripeptide (PTT), also known as bialaphos (BA), a natural-product antibiotic and potent herbicide. Catalyzes the condensation berween phosphinopyruvic acid (PPA), an analog of oxalacetic acid, and acetyl-CoA to form R-2-phosphinomethylmalic acid (PMM). Can also act on oxaloacetate, but shows no activity when acetyl-CoA is substituted by propionyl-CoA or butyryl-CoA. This chain is 2-phosphinomethylmalate synthase, found in Streptomyces hygroscopicus.